A 76-amino-acid polypeptide reads, in one-letter code: Acyl carrier protein (76 aa).

A Carrier domain is found at 1–75 (MVLEKIKTLM…DVVLYIEKNL (75 aa)). O-(pantetheine 4'-phosphoryl)serine is present on serine 35.

This sequence belongs to the acyl carrier protein (ACP) family. In terms of processing, 4'-phosphopantetheine is transferred from CoA to a specific serine of apo-ACP by AcpS. This modification is essential for activity because fatty acids are bound in thioester linkage to the sulfhydryl of the prosthetic group.

The protein localises to the cytoplasm. The protein operates within lipid metabolism; fatty acid biosynthesis. Its function is as follows. Carrier of the growing fatty acid chain in fatty acid biosynthesis. This chain is Acyl carrier protein, found in Phytoplasma australiense.